The chain runs to 267 residues: Translation initiation factor 2 subunit alpha (267 aa).

The 72-residue stretch at 10–81 folds into the S1 motif domain; sequence GELVVGKVDD…SAQQIDLSLK (72 aa).

Belongs to the eIF-2-alpha family. Heterotrimer composed of an alpha, a beta and a gamma chain.

EIF-2 functions in the early steps of protein synthesis by forming a ternary complex with GTP and initiator tRNA. In Halobacterium salinarum (strain ATCC 29341 / DSM 671 / R1), this protein is Translation initiation factor 2 subunit alpha.